Here is a 60-residue protein sequence, read N- to C-terminus: Large ribosomal subunit protein uL30 (60 aa).

Belongs to the universal ribosomal protein uL30 family. As to quaternary structure, part of the 50S ribosomal subunit.

The protein is Large ribosomal subunit protein uL30 of Bacillus pumilus (strain SAFR-032).